Here is a 1342-residue protein sequence, read N- to C-terminus: DNA-directed RNA polymerase subunit beta (1342 aa).

It belongs to the RNA polymerase beta chain family. As to quaternary structure, the RNAP catalytic core consists of 2 alpha, 1 beta, 1 beta' and 1 omega subunit. When a sigma factor is associated with the core the holoenzyme is formed, which can initiate transcription.

It catalyses the reaction RNA(n) + a ribonucleoside 5'-triphosphate = RNA(n+1) + diphosphate. Functionally, DNA-dependent RNA polymerase catalyzes the transcription of DNA into RNA using the four ribonucleoside triphosphates as substrates. This Actinobacillus pleuropneumoniae serotype 5b (strain L20) protein is DNA-directed RNA polymerase subunit beta.